The primary structure comprises 37 residues: Large ribosomal subunit protein bL36A (37 aa).

Belongs to the bacterial ribosomal protein bL36 family.

The chain is Large ribosomal subunit protein bL36A from Haemophilus ducreyi (strain 35000HP / ATCC 700724).